A 152-amino-acid chain; its full sequence is Xanthine-guanine phosphoribosyltransferase (152 aa).

5-phospho-alpha-D-ribose 1-diphosphate contacts are provided by residues 37–38, R69, and 88–96; these read RG and DDLVDTGGT. A GMP-binding site is contributed by R69. D89 provides a ligand contact to Mg(2+). D92 and I135 together coordinate guanine. The xanthine site is built by D92 and I135. GMP-binding positions include 92-96 and 134-135; these read DTGGT and WI.

Belongs to the purine/pyrimidine phosphoribosyltransferase family. XGPT subfamily. In terms of assembly, homotetramer. Mg(2+) is required as a cofactor.

Its subcellular location is the cell inner membrane. The enzyme catalyses GMP + diphosphate = guanine + 5-phospho-alpha-D-ribose 1-diphosphate. It catalyses the reaction XMP + diphosphate = xanthine + 5-phospho-alpha-D-ribose 1-diphosphate. The catalysed reaction is IMP + diphosphate = hypoxanthine + 5-phospho-alpha-D-ribose 1-diphosphate. It functions in the pathway purine metabolism; GMP biosynthesis via salvage pathway; GMP from guanine: step 1/1. The protein operates within purine metabolism; XMP biosynthesis via salvage pathway; XMP from xanthine: step 1/1. Functionally, purine salvage pathway enzyme that catalyzes the transfer of the ribosyl-5-phosphate group from 5-phospho-alpha-D-ribose 1-diphosphate (PRPP) to the N9 position of the 6-oxopurines guanine and xanthine to form the corresponding ribonucleotides GMP (guanosine 5'-monophosphate) and XMP (xanthosine 5'-monophosphate), with the release of PPi. To a lesser extent, also acts on hypoxanthine. This is Xanthine-guanine phosphoribosyltransferase from Escherichia fergusonii (strain ATCC 35469 / DSM 13698 / CCUG 18766 / IAM 14443 / JCM 21226 / LMG 7866 / NBRC 102419 / NCTC 12128 / CDC 0568-73).